The sequence spans 418 residues: Dihydrofolate synthase/folylpolyglutamate synthase (418 aa).

Position 53–56 (53–56 (GKGT)) interacts with ATP. Residue Ser-77 coordinates Mg(2+). 116–119 (TYFE) provides a ligand contact to 7,8-dihydropteroate. Glu-140 is a Mg(2+) binding site. 147-149 (LDA) is a binding site for 7,8-dihydropteroate. His-167 contributes to the Mg(2+) binding site. ATP is bound by residues Asn-252, Arg-284, and Asp-297.

This sequence belongs to the folylpolyglutamate synthase family. As to quaternary structure, monomer. It depends on Mg(2+) as a cofactor.

The catalysed reaction is 7,8-dihydropteroate + L-glutamate + ATP = 7,8-dihydrofolate + ADP + phosphate + H(+). It carries out the reaction (6S)-5,6,7,8-tetrahydrofolyl-(gamma-L-Glu)(n) + L-glutamate + ATP = (6S)-5,6,7,8-tetrahydrofolyl-(gamma-L-Glu)(n+1) + ADP + phosphate + H(+). The enzyme catalyses 10-formyltetrahydrofolyl-(gamma-L-Glu)(n) + L-glutamate + ATP = 10-formyltetrahydrofolyl-(gamma-L-Glu)(n+1) + ADP + phosphate + H(+). It catalyses the reaction (6R)-5,10-methylenetetrahydrofolyl-(gamma-L-Glu)(n) + L-glutamate + ATP = (6R)-5,10-methylenetetrahydrofolyl-(gamma-L-Glu)(n+1) + ADP + phosphate + H(+). It participates in cofactor biosynthesis; tetrahydrofolate biosynthesis; 7,8-dihydrofolate from 2-amino-4-hydroxy-6-hydroxymethyl-7,8-dihydropteridine diphosphate and 4-aminobenzoate: step 2/2. The protein operates within cofactor biosynthesis; tetrahydrofolylpolyglutamate biosynthesis. Its function is as follows. Functions in two distinct reactions of the de novo folate biosynthetic pathway. Catalyzes the addition of a glutamate residue to dihydropteroate (7,8-dihydropteroate or H2Pte) to form dihydrofolate (7,8-dihydrofolate monoglutamate or H2Pte-Glu). Also catalyzes successive additions of L-glutamate to tetrahydrofolate or 10-formyltetrahydrofolate or 5,10-methylenetetrahydrofolate, leading to folylpolyglutamate derivatives. The sequence is that of Dihydrofolate synthase/folylpolyglutamate synthase (folC) from Buchnera aphidicola subsp. Schizaphis graminum (strain Sg).